The following is a 405-amino-acid chain: N-methyltransferase nanE (405 aa).

S-adenosyl-L-methionine-binding positions include 238–239 (GG), aspartate 261, and 290–291 (HH).

Belongs to the class I-like SAM-binding methyltransferase superfamily. Cation-independent O-methyltransferase family.

Its pathway is secondary metabolite biosynthesis. N-methyltransferase; part of the gene cluster that mediates the biosynthesis of the benzazepine alkaloid nanangelenin A which contains an unprecedented 3,4-dihydro-1-benzazepine-2,5-dione-N-prenyl-N-acetoxy-anthranilamide scaffold. The first step of nanangelenin biosynthesis is catalyzed by the indoleamine 2,3-dioxygenase nanC which produces N-formyl-kynurenine through the catabolism of tryptophan. The two-module NRPS nanA then utilizes anthranilate (Ant) and L-kynurenine (L-Kyn) to assemble the dipeptide product nanangelenin B. The first adenylation domain of nanA (A1) loads anthranilate onto the T1 domain, while A2 loads kynurenine, generated through spontaneous nonenzymatic deformylation of the nanC-supplied N-formyl-kynurenine. The peptide bond formation between the tethered amino acids is catalyzed by the first condensation domain (C1) between anthranilate's carbonyl carbon and kynurenine's aliphatic primary amine. The second C domain (C2) catalyzes the final cyclization event between the aromatic amine of kynurenine and the tethered carbonyl carbon, yielding nanangelenin B. The terminal T3 domain enhances the catalytic efficiency of C2, suggesting the T2-tethered Ant-L-Kyn is transferred to T3 prior to cyclization by C2. Once released from nanA, nanangelenin B is then prenylated by the prenyltransferase nanD to form nanangelenin C. Nanangelenin C is then N-hydroxylated by the FAD-dependent monooxygenase nanF and further acetylated by the acetyltransferase nanB to yield nanangelenin F. Finally, the N-methyltransferase nanE methylates the amide nitrogen of 1-benzazepine to convert nanangelenin F into nanangelenin A. NanE is also able to methylate most of the intermediates of the pathway such as nanangelenin B and nanangelenin C to produce nanangelenin D and nanangelenin E, respectively. This is N-methyltransferase nanE from Aspergillus nanangensis.